A 1082-amino-acid polypeptide reads, in one-letter code: Integrator complex subunit 3 homolog (1082 aa).

Disordered stretches follow at residues 483 to 563, 923 to 945, and 1005 to 1082; these read PGPP…VSDD, YPSNSPNKRKRPSKSAQQNTAPT, and DETS…SDSD. Composition is skewed to low complexity over residues 517–528 and 542–555; these read PAAKAASTAASA and TKPATTTTTTTTTT. Over residues 936 to 945 the composition is skewed to polar residues; sequence KSAQQNTAPT. Low complexity-rich tracts occupy residues 1008–1018 and 1033–1056; these read STTVGRRGTSS and EKAAAAAAAAHANNSKKAAEASAK.

This sequence belongs to the Integrator subunit 3 family. As to quaternary structure, belongs to the multiprotein complex Integrator. The core complex associates with protein phosphatase 2A subunits, to form the Integrator-PP2A (INTAC) complex.

The protein resides in the nucleus. Its subcellular location is the cytoplasm. Its function is as follows. Component of the integrator complex, a multiprotein complex that terminates RNA polymerase II (Pol II) transcription in the promoter-proximal region of genes. The integrator complex provides a quality checkpoint during transcription elongation by driving premature transcription termination of transcripts that are unfavorably configured for transcriptional elongation: the complex terminates transcription by (1) catalyzing dephosphorylation of the C-terminal domain (CTD) of Pol II subunit Polr2A/Rbp1 and Spt5, and (2) degrading the exiting nascent RNA transcript via endonuclease activity. The integrator complex is also involved in the 3'-end processing of the U7 snRNA, and also the spliceosomal snRNAs U1, U2, U4 and U5. This chain is Integrator complex subunit 3 homolog, found in Anopheles gambiae (African malaria mosquito).